Consider the following 141-residue polypeptide: ATP synthase epsilon chain 1 (141 aa).

Belongs to the ATPase epsilon chain family. F-type ATPases have 2 components, CF(1) - the catalytic core - and CF(0) - the membrane proton channel. CF(1) has five subunits: alpha(3), beta(3), gamma(1), delta(1), epsilon(1). CF(0) has three main subunits: a, b and c.

It localises to the cell inner membrane. Its function is as follows. Produces ATP from ADP in the presence of a proton gradient across the membrane. In Paraburkholderia xenovorans (strain LB400), this protein is ATP synthase epsilon chain 1.